A 618-amino-acid chain; its full sequence is Chaperone protein DnaK (618 aa).

Threonine 175 is subject to Phosphothreonine; by autocatalysis. A disordered region spans residues 576-618 (SQNAEPGADGGANSGANPGGTTGNTDTKDDNVVDAEYKVDDDK). Positions 583-597 (ADGGANSGANPGGTT) are enriched in gly residues. Over residues 601–618 (DTKDDNVVDAEYKVDDDK) the composition is skewed to basic and acidic residues.

Belongs to the heat shock protein 70 family.

In terms of biological role, acts as a chaperone. The polypeptide is Chaperone protein DnaK (Clostridium kluyveri (strain NBRC 12016)).